The sequence spans 131 residues: uncharacterized protein (131 aa).

The next 2 membrane-spanning stretches (helical) occupy residues 5–25 and 34–54; these read VQPI…YVLV and MAVT…YVMN. The tract at residues 62-131 is disordered; that stretch reads AAFKKAAKQS…KNKKKNRALF (70 aa). Composition is skewed to basic residues over residues 66-92 and 122-131; these read KAAK…RVSH and KNKKKNRALF.

The protein localises to the cell membrane. This is an uncharacterized protein from Bacillus subtilis (strain 168).